Here is a 191-residue protein sequence, read N- to C-terminus: Cytochrome c biogenesis ATP-binding export protein CcmA (191 aa).

The ABC transporter domain occupies 6 to 189 (LVATDIACRR…RVRTLAIRNF (184 aa)). Residue 38–45 (GANGIGKS) coordinates ATP.

Belongs to the ABC transporter superfamily. CcmA exporter (TC 3.A.1.107) family. As to quaternary structure, the complex is composed of two ATP-binding proteins (CcmA) and two transmembrane proteins (CcmB).

It is found in the cell inner membrane. The enzyme catalyses heme b(in) + ATP + H2O = heme b(out) + ADP + phosphate + H(+). Functionally, part of the ABC transporter complex CcmAB involved in the biogenesis of c-type cytochromes; once thought to export heme, this seems not to be the case, but its exact role is uncertain. Responsible for energy coupling to the transport system. This is Cytochrome c biogenesis ATP-binding export protein CcmA from Novosphingobium aromaticivorans (strain ATCC 700278 / DSM 12444 / CCUG 56034 / CIP 105152 / NBRC 16084 / F199).